The following is a 232-amino-acid chain: Ribosome maturation protein SDO1 homolog (232 aa).

The protein belongs to the SDO1/SBDS family.

The polypeptide is Ribosome maturation protein SDO1 homolog (Methanothermobacter thermautotrophicus (strain ATCC 29096 / DSM 1053 / JCM 10044 / NBRC 100330 / Delta H) (Methanobacterium thermoautotrophicum)).